Consider the following 596-residue polypeptide: Alkaline phosphatase 4 (596 aa).

The signal sequence occupies residues 1–20 (MHCLVILGFLLGSLVAFSWA). Residue Asp-93 participates in Mg(2+) binding. Residue Asp-93 coordinates Zn(2+). The active-site Phosphoserine intermediate is the Ser-144. The Mg(2+) site is built by His-202 and Thr-204. 2 N-linked (GlcNAc...) asparagine glycosylation sites follow: Asn-262 and Asn-297. Residue Glu-369 participates in Mg(2+) binding. Asp-374 and His-378 together coordinate Zn(2+). Asn-401 is a glycosylation site (N-linked (GlcNAc...) asparagine). Zn(2+)-binding residues include Asp-415 and His-416. Asn-464 and Asn-470 each carry an N-linked (GlcNAc...) asparagine glycan. A Zn(2+)-binding site is contributed by His-504. An intrachain disulfide couples Cys-539 to Cys-550. Basic and acidic residues predominate over residues 548-566 (DSCEDHKDGQKDRPLDKPN). The segment at 548–570 (DSCEDHKDGQKDRPLDKPNPKRN) is disordered. The GPI-anchor amidated asparagine moiety is linked to residue Asn-570. Residues 571-591 (GATVVGASLIPILTAATAAIL) traverse the membrane as a helical segment. Positions 571 to 596 (GATVVGASLIPILTAATAAILRGRGL) are cleaved as a propeptide — removed in mature form.

It belongs to the alkaline phosphatase family. Homodimer. Mg(2+) serves as cofactor. The cofactor is Zn(2+). In terms of tissue distribution, ellipsoid body ring neurons in the adult brain and in the lower Malpighian tubule and ureter.

It is found in the cell membrane. It catalyses the reaction a phosphate monoester + H2O = an alcohol + phosphate. In terms of biological role, important role in neural and renal epithelial function. The protein is Alkaline phosphatase 4 of Drosophila melanogaster (Fruit fly).